The chain runs to 382 residues: MSAWVLPDHIADVLPSEARHIEELRRGLLDTARSYGYELVMPPLLEHLESLLTGTGEALDLQTFKLVDQLSGRSLGLRADTTQQVARIDAHLLNRQGVARLCYCGPVLHTRPDRPHATREPLQFGAEIYGHPGIEADIEAVLLSLECLRSAHVQEVSVDLADVRIVRSLLAGLPVGMHQLAQVHGALAAKDASELASLTRDFPSASREGLLALLQLYGDAAVLNEAENLLKPFPGAREALSDLRAIAARMDGVRVTFDLADLRGYAYYSGARFAIYAQGASDALVRGGRYDEVGAVFGRNRPAAGFSLDVKQLVGVVSAPSLRAAIRAPWGDGGALSAAIATLRRQGETVVCVLPGHGSEVDEFHCDRELVLVDGNWVVKAI.

This sequence belongs to the class-II aminoacyl-tRNA synthetase family. HisZ subfamily. In terms of assembly, heteromultimer composed of HisG and HisZ subunits.

The protein localises to the cytoplasm. The protein operates within amino-acid biosynthesis; L-histidine biosynthesis; L-histidine from 5-phospho-alpha-D-ribose 1-diphosphate: step 1/9. Its function is as follows. Required for the first step of histidine biosynthesis. May allow the feedback regulation of ATP phosphoribosyltransferase activity by histidine. The protein is ATP phosphoribosyltransferase regulatory subunit of Acidovorax sp. (strain JS42).